The primary structure comprises 158 residues: Sporulation-delaying protein SdpA (158 aa).

It is found in the cytoplasm. Its function is as follows. Required for the maturation of SdpC to SDP. Not required for SdpC signal peptide cleavage, secretion from the cell or disulfide bond formation. The protein is Sporulation-delaying protein SdpA of Bacillus subtilis (strain 168).